Reading from the N-terminus, the 2789-residue chain is Testis-expressed protein 15 (2789 aa).

The segment covering His34–Lys46 has biased composition (polar residues). Disordered stretches follow at residues His34–Val99, Glu169–Lys191, Phe1063–Pro1166, Lys2303–Val2331, and Lys2351–Lys2379. Positions Ser47–Ser59 are enriched in basic and acidic residues. A compositionally biased stretch (polar residues) spans Asp80–Glu98. Residues Asn170–Gln179 are compositionally biased toward basic and acidic residues. The span at Phe1063–Ala1077 shows a compositional bias: basic residues. Low complexity-rich tracts occupy residues Arg1106–Ser1116 and Ser1134–Leu1160.

The protein belongs to the TEX15 family. In terms of assembly, interacts with PIWIL4 and PIWIL2. In terms of tissue distribution, expressed in testis, predominantly in germ cells. Low expression, if any, in ovary. Also expressed in several cancers.

The protein localises to the cytoplasm. The protein resides in the nucleus. Required during spermatogenesis for normal chromosome synapsis and meiotic recombination in germ cells. Necessary for formation of DMC1 and RAD51 foci on meiotic chromosomes, suggesting a specific role in DNA double-stranded break repair. Essential executor of PIWIL4-piRNA pathway directed transposon DNA methylation and silencing in the male embryonic germ cells. PIWIL4-piRNA binds to nascent transposon transcripts and interacts with TEX15, which may in turn recruit the epigenetic silencing machinery to the transposon loci. Not required for piRNA biosynthesis. In Homo sapiens (Human), this protein is Testis-expressed protein 15 (TEX15).